We begin with the raw amino-acid sequence, 257 residues long: MDVIPAIDLLEGRCVRLYQGDYDQSQVFSENPVEVAKAWEAQGAQWLHLVDLDGAKTGQPVNLDTIAAVVEALEIPVQVGGGLRDRNRVTQLLNLGVRRGILGTVAIENPDLVQELCQEFPDQIVVGIDAREGRVATRGWLETSEILAVDLAKRMVTAGAAAIIYTDIQRDGTLQGPNIPMLREMAEAITIPVIASGGVSSITDLLNLLALEAIGVTGAIVGKALYTEDIALSEALRAVGPGRWQDVPPDLGSSALA.

Catalysis depends on aspartate 8, which acts as the Proton acceptor. Aspartate 129 serves as the catalytic Proton donor.

Belongs to the HisA/HisF family.

It localises to the cytoplasm. It catalyses the reaction 1-(5-phospho-beta-D-ribosyl)-5-[(5-phospho-beta-D-ribosylamino)methylideneamino]imidazole-4-carboxamide = 5-[(5-phospho-1-deoxy-D-ribulos-1-ylimino)methylamino]-1-(5-phospho-beta-D-ribosyl)imidazole-4-carboxamide. It functions in the pathway amino-acid biosynthesis; L-histidine biosynthesis; L-histidine from 5-phospho-alpha-D-ribose 1-diphosphate: step 4/9. In Acaryochloris marina (strain MBIC 11017), this protein is 1-(5-phosphoribosyl)-5-[(5-phosphoribosylamino)methylideneamino] imidazole-4-carboxamide isomerase.